The following is a 318-amino-acid chain: Transaldolase (318 aa).

Residue lysine 132 is the Schiff-base intermediate with substrate of the active site.

Belongs to the transaldolase family. Type 1 subfamily. As to quaternary structure, homodimer.

The protein resides in the cytoplasm. The catalysed reaction is D-sedoheptulose 7-phosphate + D-glyceraldehyde 3-phosphate = D-erythrose 4-phosphate + beta-D-fructose 6-phosphate. It functions in the pathway carbohydrate degradation; pentose phosphate pathway; D-glyceraldehyde 3-phosphate and beta-D-fructose 6-phosphate from D-ribose 5-phosphate and D-xylulose 5-phosphate (non-oxidative stage): step 2/3. Its function is as follows. Transaldolase is important for the balance of metabolites in the pentose-phosphate pathway. The polypeptide is Transaldolase (Shewanella baltica (strain OS195)).